Here is a 178-residue protein sequence, read N- to C-terminus: Large ribosomal subunit protein bL19 (178 aa).

The protein belongs to the bacterial ribosomal protein bL19 family.

This protein is located at the 30S-50S ribosomal subunit interface and may play a role in the structure and function of the aminoacyl-tRNA binding site. The sequence is that of Large ribosomal subunit protein bL19 from Rhizobium etli (strain ATCC 51251 / DSM 11541 / JCM 21823 / NBRC 15573 / CFN 42).